A 145-amino-acid polypeptide reads, in one-letter code: Protein X (145 aa).

The segment at 68–117 (PCALRFTSARRMETTVNAHQVLPKVLHKRTLGLSAMSTTDLEAYFKDCVF) is mitochondrial targeting sequence.

The protein belongs to the orthohepadnavirus protein X family. As to quaternary structure, may form homodimer. May interact with host CEBPA, CFLAR, CREB1, DDB1, E4F1, HBXIP, HSPD1/HSP60, NFKBIA, POLR2E and SMAD4. Interacts with host SMC5-SMC6 complex and induces its degradation. Interacts with host TRPC4AP; leading to prevent ubiquitination of TRPC4AP. Interacts with host PLSCR1; this interaction promotes ubiquitination and degradation of HBx and impairs HBx-mediated cell proliferation. A fraction may be phosphorylated in insect cells and HepG2 cells, a human hepatoblastoma cell line. Phosphorylated in vitro by host protein kinase C or mitogen-activated protein kinase. N-acetylated in insect cells.

The protein localises to the host cytoplasm. Its subcellular location is the host nucleus. It localises to the host mitochondrion. Its function is as follows. Multifunctional protein that plays a role in silencing host antiviral defenses and promoting viral transcription. Does not seem to be essential for HBV infection. May be directly involved in development of cirrhosis and liver cancer (hepatocellular carcinoma). Most of cytosolic activities involve modulation of cytosolic calcium. The effect on apoptosis is controversial depending on the cell types in which the studies have been conducted. May induce apoptosis by localizing in mitochondria and causing loss of mitochondrial membrane potential. May also modulate apoptosis by binding host CFLAR, a key regulator of the death-inducing signaling complex (DISC). Promotes viral transcription by using the host E3 ubiquitin ligase DDB1 to target the SMC5-SMC6 complex to proteasomal degradation. This host complex would otherwise bind to viral episomal DNA, and prevents its transcription. Moderately stimulates transcription of many different viral and cellular transcription elements. Promoters and enhancers stimulated by HBx contain DNA binding sites for NF-kappa-B, AP-1, AP-2, c-EBP, ATF/CREB, or the calcium-activated factor NF-AT. In Homo sapiens (Human), this protein is Protein X.